Reading from the N-terminus, the 472-residue chain is Major capsid protein (472 aa).

This sequence belongs to the phi29 phage major capsid protein family.

Its subcellular location is the virion. Assembles to form a prolate capsid of about 45x54 nm, with a T=3, Q=5 symmetry. This chain is Major capsid protein (8), found in Bacillus phage GA-1 (Bacteriophage GA-1).